Here is a 237-residue protein sequence, read N- to C-terminus: NAD-dependent protein deacylase (237 aa).

Residues 1 to 235 (MRVAVLSGAG…PGLLERLPAL (235 aa)) enclose the Deacetylase sirtuin-type domain. Position 8 to 28 (8 to 28 (GAGISAESGVPTFRDDKNGLW)) interacts with NAD(+). Substrate contacts are provided by Tyr53 and Arg56. 86-89 (QNVD) is a binding site for NAD(+). Residue His104 is the Proton acceptor of the active site. Residues Cys112, Cys115, Cys138, and Cys140 each coordinate Zn(2+). NAD(+) is bound by residues 177-179 (GTS), 203-205 (NPE), and Ala221.

The protein belongs to the sirtuin family. Class III subfamily. The cofactor is Zn(2+).

Its subcellular location is the cytoplasm. It catalyses the reaction N(6)-acetyl-L-lysyl-[protein] + NAD(+) + H2O = 2''-O-acetyl-ADP-D-ribose + nicotinamide + L-lysyl-[protein]. The catalysed reaction is N(6)-succinyl-L-lysyl-[protein] + NAD(+) + H2O = 2''-O-succinyl-ADP-D-ribose + nicotinamide + L-lysyl-[protein]. NAD-dependent lysine deacetylase and desuccinylase that specifically removes acetyl and succinyl groups on target proteins. Modulates the activities of several proteins which are inactive in their acylated form. The chain is NAD-dependent protein deacylase from Mycobacterium bovis (strain ATCC BAA-935 / AF2122/97).